Here is a 235-residue protein sequence, read N- to C-terminus: Ribonuclease 3 (235 aa).

The region spanning Pro-8–Gly-137 is the RNase III domain. Glu-50 is a binding site for Mg(2+). The active site involves Asp-54. 2 residues coordinate Mg(2+): Asp-123 and Glu-126. Glu-126 is a catalytic residue. Residues Asp-163–Gly-232 enclose the DRBM domain. The segment at Gln-211–Gly-235 is disordered. Basic and acidic residues predominate over residues Ala-226 to Gly-235.

It belongs to the ribonuclease III family. In terms of assembly, homodimer. Mg(2+) is required as a cofactor.

The protein resides in the cytoplasm. It catalyses the reaction Endonucleolytic cleavage to 5'-phosphomonoester.. Its function is as follows. Digests double-stranded RNA. Involved in the processing of primary rRNA transcript to yield the immediate precursors to the large and small rRNAs (23S and 16S). Processes some mRNAs, and tRNAs when they are encoded in the rRNA operon. Processes pre-crRNA and tracrRNA of type II CRISPR loci if present in the organism. The sequence is that of Ribonuclease 3 from Heliobacterium modesticaldum (strain ATCC 51547 / Ice1).